The sequence spans 617 residues: ATP-dependent RNA helicase DBP1 (617 aa).

A disordered region spans residues 1–90 (MADLPQKVSN…TSANYNRGGS (90 aa)). Residues 7–17 (KVSNLSINNKE) show a composition bias toward polar residues. Basic and acidic residues predominate over residues 38 to 58 (PSFERSTPKQEDKVTGGDFFR). The span at 79-90 (GGTSANYNRGGS) shows a compositional bias: polar residues. A Q motif motif is present at residues 154-182 (LDFSSPPLDELLMENIKLASFTKPTPVQK). One can recognise a Helicase ATP-binding domain in the interval 185–374 (IPIVTKGRDL…RDFLDNYIFL (190 aa)). 198-205 (AQTGSGKT) is an ATP binding site. The DEAD box signature appears at 318–321 (DEAD). A Helicase C-terminal domain is found at 385–545 (NITQRILYVD…EVPTFLSDLS (161 aa)). Residues 542–617 (SDLSRQNSRG…GYGNSNASWW (76 aa)) form a disordered region. Polar residues predominate over residues 580–594 (FGSTRPRNTGTSNWG).

It belongs to the DEAD box helicase family. DDX3/DED1 subfamily.

It is found in the cytoplasm. It catalyses the reaction ATP + H2O = ADP + phosphate + H(+). In terms of biological role, ATP-binding RNA helicase involved in translation initiation. Remodels RNA in response to ADP and ATP concentrations by facilitating disruption, but also formation of RNA duplexes. Redundant to DED1, may be required in conditions in which DED1 expression is decreased. In Saccharomyces cerevisiae (strain ATCC 204508 / S288c) (Baker's yeast), this protein is ATP-dependent RNA helicase DBP1 (DBP1).